Here is a 189-residue protein sequence, read N- to C-terminus: Small ribosomal subunit protein uS5 (189 aa).

An S5 DRBM domain is found at 22–85; sequence FVDKLVAINR…EAAKRDLIFV (64 aa).

It belongs to the universal ribosomal protein uS5 family. In terms of assembly, part of the 30S ribosomal subunit. Contacts proteins S4 and S8.

Functionally, with S4 and S12 plays an important role in translational accuracy. Its function is as follows. Located at the back of the 30S subunit body where it stabilizes the conformation of the head with respect to the body. The sequence is that of Small ribosomal subunit protein uS5 from Sinorhizobium fredii (strain NBRC 101917 / NGR234).